The primary structure comprises 413 residues: Multifunctional CCA protein (413 aa).

Residues glycine 8 and arginine 11 each coordinate ATP. CTP-binding residues include glycine 8 and arginine 11. Positions 21 and 23 each coordinate Mg(2+). ATP is bound by residues arginine 91, arginine 137, and arginine 140. CTP contacts are provided by arginine 91, arginine 137, and arginine 140. Residues 228–329 (TGIHTLMVLE…VKIFDKADLW (102 aa)) form the HD domain.

The protein belongs to the tRNA nucleotidyltransferase/poly(A) polymerase family. Bacterial CCA-adding enzyme type 1 subfamily. Monomer. Can also form homodimers and oligomers. Mg(2+) is required as a cofactor. Ni(2+) serves as cofactor.

The catalysed reaction is a tRNA precursor + 2 CTP + ATP = a tRNA with a 3' CCA end + 3 diphosphate. It catalyses the reaction a tRNA with a 3' CCA end + 2 CTP + ATP = a tRNA with a 3' CCACCA end + 3 diphosphate. Functionally, catalyzes the addition and repair of the essential 3'-terminal CCA sequence in tRNAs without using a nucleic acid template. Adds these three nucleotides in the order of C, C, and A to the tRNA nucleotide-73, using CTP and ATP as substrates and producing inorganic pyrophosphate. tRNA 3'-terminal CCA addition is required both for tRNA processing and repair. Also involved in tRNA surveillance by mediating tandem CCA addition to generate a CCACCA at the 3' terminus of unstable tRNAs. While stable tRNAs receive only 3'-terminal CCA, unstable tRNAs are marked with CCACCA and rapidly degraded. This chain is Multifunctional CCA protein, found in Shewanella sediminis (strain HAW-EB3).